The primary structure comprises 623 residues: Activator of C kinase protein 1 (623 aa).

Residues 141–230 (KESLGSPAVQ…GSSGGEDKLS (90 aa)) form a disordered region. Positions 152–161 (ASISSGNRIS) are enriched in polar residues. The segment covering 176-193 (SESRILQEKVYRTEEKAP) has biased composition (basic and acidic residues). Glycyl lysine isopeptide (Lys-Gly) (interchain with G-Cter in ubiquitin) cross-links involve residues K184 and K191. Over residues 206–215 (KINQPPTGSA) the composition is skewed to polar residues. Sel1-like repeat units follow at residues 318–361 (PPAM…KLNN), 408–444 (SACMYKLGMSHLYGLNMQKTDVLLAIKWFDKAAQKGD), 495–531 (PLAQWKLGNCYEFGDLGLPVVAKKSIYWYSKAAAAQP), and 576–611 (ARTEFALGFYYEKGVGCEVDLDLAKQYYQRAARMGF).

In Saccharomyces cerevisiae (strain ATCC 204508 / S288c) (Baker's yeast), this protein is Activator of C kinase protein 1 (ACK1).